We begin with the raw amino-acid sequence, 100 residues long: Defensin-B4 (100 aa).

The signal sequence occupies residues 1 to 22 (MRASLLLFILLVYLAHAPQAQG). Positions 23–26 (VFGP) are excised as a propeptide. 3 disulfides stabilise this stretch: C29/C56, C36/C50, and C40/C57. Positions 60 to 100 (STGTSSSQGSHEVPVINSEPALESKPEPQDTQEEEATMVSE) are disordered. Residues 89–100 (DTQEEEATMVSE) are compositionally biased toward acidic residues.

It belongs to the beta-defensin family. As to expression, highly expressed in kidney, lowly expressed in spleen, and expressed at lower levels in lung.

The protein resides in the secreted. Has antimicrobial activity. The chain is Defensin-B4 from Ornithorhynchus anatinus (Duckbill platypus).